The primary structure comprises 193 residues: Holliday junction branch migration complex subunit RuvA (193 aa).

The domain I stretch occupies residues 1–64 (MIGRIAGVLL…EDAHLLYGFG (64 aa)). Residues 65 to 139 (TAEERSTFRE…GKIGADLGAM (75 aa)) form a domain II region. A flexible linker region spans residues 139-143 (MAGAA). Positions 144–193 (SASDHASDILNALLALGYSEKEALTAVKNVPAGTGVSEGIKLALKALSKG) are domain III.

Belongs to the RuvA family. In terms of assembly, homotetramer. Forms an RuvA(8)-RuvB(12)-Holliday junction (HJ) complex. HJ DNA is sandwiched between 2 RuvA tetramers; dsDNA enters through RuvA and exits via RuvB. An RuvB hexamer assembles on each DNA strand where it exits the tetramer. Each RuvB hexamer is contacted by two RuvA subunits (via domain III) on 2 adjacent RuvB subunits; this complex drives branch migration. In the full resolvosome a probable DNA-RuvA(4)-RuvB(12)-RuvC(2) complex forms which resolves the HJ.

The protein resides in the cytoplasm. In terms of biological role, the RuvA-RuvB-RuvC complex processes Holliday junction (HJ) DNA during genetic recombination and DNA repair, while the RuvA-RuvB complex plays an important role in the rescue of blocked DNA replication forks via replication fork reversal (RFR). RuvA specifically binds to HJ cruciform DNA, conferring on it an open structure. The RuvB hexamer acts as an ATP-dependent pump, pulling dsDNA into and through the RuvAB complex. HJ branch migration allows RuvC to scan DNA until it finds its consensus sequence, where it cleaves and resolves the cruciform DNA. In Paraburkholderia phytofirmans (strain DSM 17436 / LMG 22146 / PsJN) (Burkholderia phytofirmans), this protein is Holliday junction branch migration complex subunit RuvA.